Reading from the N-terminus, the 824-residue chain is Dapper 1-B (824 aa).

Disordered stretches follow at residues 1 to 33 (MKPI…RQRT), 131 to 150 (EEHL…LSDG), and 515 to 534 (HASS…EGSS). The tract at residues 2–343 (KPIPAAPEPL…PVRTNKPRTS (342 aa)) is interaction with tcf7l1-A. The span at 16 to 33 (DSPRRKDKGEAESERQRT) shows a compositional bias: basic and acidic residues. Residues 84–139 (EEKFLEDNILLLKKQLNCLRKRDAGLLSQLHELDKQINDLRIDVEKTEEHLETDSR) are a coiled coil. A compositionally biased stretch (basic and acidic residues) spans 520–530 (FDERPPLDFKS). Positions 821–824 (MTTV) match the PDZ-binding motif.

This sequence belongs to the dapper family. Interacts with dbf4 and tcf7l1-A. Interacts with dvl2/dsh; the interaction is required for dact1-b phosphorylation by CaMK1D and seems to become disrupted by the phosphorylation. Phosphorylated by CaMK1D; the phosphorylation requires binding to dvl2/dsh. As to expression, expressed both in the dorsal lip in early gastrula and throughout the posterior presumptive ectoderm in early neurula. Expressed in the dorsal neural folds at the tailbud stage and highly expressed in the tadpole head, including the brain, retina and cartilaginous branchial arch derivatives.

The protein localises to the cytoplasm. Its subcellular location is the nucleus. In terms of biological role, involved in regulation of intracellular signaling pathways during development. Specifically thought to play a role in canonical and/or non-canonical Wnt signaling pathways through interaction with DSH (Dishevelled) family proteins. Binds to dvl2 to regulate the degradation of beta-catenin (ctnnb1-A and possibly ctnnb1-B), thereby modulating the transcriptional activation of target genes of the Wnt signaling pathway. Seems to promote beta-catenin degradation if not phosphorylated and to block beta-catenin degradation if phosphorylated by CaMK1D. Involved in regulation of catenin delta/ctnnd1 protein level. May also bind to and directly stimulate the activity of tcf7l1-A. Also regulates the activation by dvl2 of jnk, a component of ctnnb1/beta-catenin-independent frizzled signaling. Required for notochord and head formation. In Xenopus laevis (African clawed frog), this protein is Dapper 1-B (dact1-b).